Reading from the N-terminus, the 375-residue chain is UDP-N-acetylglucosamine--N-acetylmuramyl-(pentapeptide) pyrophosphoryl-undecaprenol N-acetylglucosamine transferase (375 aa).

UDP-N-acetyl-alpha-D-glucosamine contacts are provided by residues 13-15 (TGG), Asn124, Arg165, Ser193, and Gln294.

It belongs to the glycosyltransferase 28 family. MurG subfamily.

The protein localises to the cell inner membrane. The catalysed reaction is di-trans,octa-cis-undecaprenyl diphospho-N-acetyl-alpha-D-muramoyl-L-alanyl-D-glutamyl-meso-2,6-diaminopimeloyl-D-alanyl-D-alanine + UDP-N-acetyl-alpha-D-glucosamine = di-trans,octa-cis-undecaprenyl diphospho-[N-acetyl-alpha-D-glucosaminyl-(1-&gt;4)]-N-acetyl-alpha-D-muramoyl-L-alanyl-D-glutamyl-meso-2,6-diaminopimeloyl-D-alanyl-D-alanine + UDP + H(+). Its pathway is cell wall biogenesis; peptidoglycan biosynthesis. Cell wall formation. Catalyzes the transfer of a GlcNAc subunit on undecaprenyl-pyrophosphoryl-MurNAc-pentapeptide (lipid intermediate I) to form undecaprenyl-pyrophosphoryl-MurNAc-(pentapeptide)GlcNAc (lipid intermediate II). The chain is UDP-N-acetylglucosamine--N-acetylmuramyl-(pentapeptide) pyrophosphoryl-undecaprenol N-acetylglucosamine transferase from Brucella anthropi (strain ATCC 49188 / DSM 6882 / CCUG 24695 / JCM 21032 / LMG 3331 / NBRC 15819 / NCTC 12168 / Alc 37) (Ochrobactrum anthropi).